The sequence spans 393 residues: S-adenosylmethionine sensor upstream of mTORC1 (393 aa).

The disordered stretch occupies residues 1–35 (MDLRSSAETDPDLSENHPGSVPAELQSRKQEQEKL). Arg94 contacts S-adenosyl-L-methionine. A disordered region spans residues 118–141 (DEKSARHATAGNANTDTNAPPQLS). The segment covering 125–136 (ATAGNANTDTNA) has biased composition (low complexity). Residues Gly160, Asp178, Asp190, Phe191, and Ser232 each coordinate S-adenosyl-L-methionine. A disordered region spans residues 362–393 (ELPETPYDSDSGESQSSSAPFYELEDPILLQS).

It belongs to the BMT2/SAMTOR family. As to quaternary structure, interacts with the GATOR1 complex; interaction is disrupted when samtor binds S-adenosyl-L-methionine. Interacts with the KICSTOR complex; interaction is disrupted when bmt2/samtor binds S-adenosyl-L-methionine.

S-adenosyl-L-methionine-binding protein that acts as an inhibitor of mTORC1 signaling via interaction with the GATOR1 and KICSTOR complexes. Acts as a sensor of S-adenosyl-L-methionine to signal methionine sufficiency to mTORC1: in presence of methionine, binds S-adenosyl-L-methionine, leading to disrupt interaction with the GATOR1 and KICSTOR complexes and promote mTORC1 signaling. Upon methionine starvation, S-adenosyl-L-methionine levels are reduced, thereby promoting the association with GATOR1 and KICSTOR, leading to inhibit mTORC1 signaling. Probably also acts as a S-adenosyl-L-methionine-dependent methyltransferase. The sequence is that of S-adenosylmethionine sensor upstream of mTORC1 from Danio rerio (Zebrafish).